A 75-amino-acid polypeptide reads, in one-letter code: Small capsomere-interacting protein (75 aa).

This sequence belongs to the herpesviridae small capsomere-interacting protein family. Interacts with the major capsid protein/MCP.

Its subcellular location is the virion. The protein resides in the host nucleus. Functionally, participates in the assembly of the infectious particles by decorating the outer surface of the capsid shell and thus forming a layer between the capsid and the tegument. Complexes composed of the capsid protein VP5 and UL48A assemble together in the host cytoplasm and are translocated to the nucleus, where they accumulate and participate in capsid assembly. Participates in the assembly of the infectious particles by decorating the outer surface of the capsid shell and thus forming a layer between the capsid and the tegument. Complexes composed of the major capsid protein and small capsomere-interacting protein/SCP assemble together in the host cytoplasm and are translocated to the nucleus, where they accumulate and participate in capsid assembly. This chain is Small capsomere-interacting protein, found in Homo sapiens (Human).